A 101-amino-acid chain; its full sequence is Large ribosomal subunit protein uL23 (101 aa).

The protein belongs to the universal ribosomal protein uL23 family. As to quaternary structure, part of the 50S ribosomal subunit. Contacts protein L29, and trigger factor when it is bound to the ribosome.

Its function is as follows. One of the early assembly proteins it binds 23S rRNA. One of the proteins that surrounds the polypeptide exit tunnel on the outside of the ribosome. Forms the main docking site for trigger factor binding to the ribosome. This Corynebacterium kroppenstedtii (strain DSM 44385 / JCM 11950 / CIP 105744 / CCUG 35717) protein is Large ribosomal subunit protein uL23.